We begin with the raw amino-acid sequence, 321 residues long: Probable protein phosphatase 2C 44 (321 aa).

Disordered regions lie at residues 1–36 (MVGR…GGKK) and 51–70 (NSSS…NKVT). The segment covering 9 to 31 (SASSSASCSPSSSAAGTSSSSSA) has biased composition (low complexity). The segment covering 51–69 (NSSSTDTGKGRSKQSSNKV) has biased composition (polar residues). The PPM-type phosphatase domain occupies 70–319 (THGFHLVEGK…DDISCIVIRF (250 aa)). Residues Asp-107, Gly-108, Asp-271, and Asp-310 each coordinate Mn(2+).

Belongs to the PP2C family. Mg(2+) serves as cofactor. The cofactor is Mn(2+).

It carries out the reaction O-phospho-L-seryl-[protein] + H2O = L-seryl-[protein] + phosphate. It catalyses the reaction O-phospho-L-threonyl-[protein] + H2O = L-threonyl-[protein] + phosphate. The sequence is that of Probable protein phosphatase 2C 44 from Oryza sativa subsp. japonica (Rice).